We begin with the raw amino-acid sequence, 352 residues long: UDP-N-acetylglucosamine--N-acetylmuramyl-(pentapeptide) pyrophosphoryl-undecaprenol N-acetylglucosamine transferase (352 aa).

Residues 11–13, asparagine 120, arginine 161, serine 188, and glutamine 286 each bind UDP-N-acetyl-alpha-D-glucosamine; that span reads TGG.

This sequence belongs to the glycosyltransferase 28 family. MurG subfamily.

The protein localises to the cell inner membrane. The enzyme catalyses di-trans,octa-cis-undecaprenyl diphospho-N-acetyl-alpha-D-muramoyl-L-alanyl-D-glutamyl-meso-2,6-diaminopimeloyl-D-alanyl-D-alanine + UDP-N-acetyl-alpha-D-glucosamine = di-trans,octa-cis-undecaprenyl diphospho-[N-acetyl-alpha-D-glucosaminyl-(1-&gt;4)]-N-acetyl-alpha-D-muramoyl-L-alanyl-D-glutamyl-meso-2,6-diaminopimeloyl-D-alanyl-D-alanine + UDP + H(+). It participates in cell wall biogenesis; peptidoglycan biosynthesis. Cell wall formation. Catalyzes the transfer of a GlcNAc subunit on undecaprenyl-pyrophosphoryl-MurNAc-pentapeptide (lipid intermediate I) to form undecaprenyl-pyrophosphoryl-MurNAc-(pentapeptide)GlcNAc (lipid intermediate II). This is UDP-N-acetylglucosamine--N-acetylmuramyl-(pentapeptide) pyrophosphoryl-undecaprenol N-acetylglucosamine transferase from Prochlorococcus marinus (strain NATL2A).